Consider the following 223-residue polypeptide: Deoxyribose-phosphate aldolase (223 aa).

Asp-92 serves as the catalytic Proton donor/acceptor. Lys-154 (schiff-base intermediate with acetaldehyde) is an active-site residue. Lys-182 acts as the Proton donor/acceptor in catalysis.

It belongs to the DeoC/FbaB aldolase family. DeoC type 1 subfamily.

It localises to the cytoplasm. The enzyme catalyses 2-deoxy-D-ribose 5-phosphate = D-glyceraldehyde 3-phosphate + acetaldehyde. Its pathway is carbohydrate degradation; 2-deoxy-D-ribose 1-phosphate degradation; D-glyceraldehyde 3-phosphate and acetaldehyde from 2-deoxy-alpha-D-ribose 1-phosphate: step 2/2. In terms of biological role, catalyzes a reversible aldol reaction between acetaldehyde and D-glyceraldehyde 3-phosphate to generate 2-deoxy-D-ribose 5-phosphate. In Haemophilus influenzae (strain ATCC 51907 / DSM 11121 / KW20 / Rd), this protein is Deoxyribose-phosphate aldolase.